We begin with the raw amino-acid sequence, 55 residues long: VTSYTLNEVVPLKDVVPEWVRIGFSATTGAEFAAHEVLSWSFHSELGGTSASKQS.

It belongs to the leguminous lectin family. In terms of assembly, tetramer of two alpha and two beta chains.

This chain is Mannose/glucose-specific lectin alpha chain, found in Lathyrus sativus (White vetchling).